A 327-amino-acid chain; its full sequence is GMP reductase (327 aa).

Catalysis depends on Cys176, which acts as the Thioimidate intermediate. 205 to 228 (IIADGGIRTHGDIAKSIRFGASMV) lines the NADP(+) pocket.

It belongs to the IMPDH/GMPR family. GuaC type 2 subfamily.

The enzyme catalyses IMP + NH4(+) + NADP(+) = GMP + NADPH + 2 H(+). Catalyzes the irreversible NADPH-dependent deamination of GMP to IMP. It functions in the conversion of nucleobase, nucleoside and nucleotide derivatives of G to A nucleotides, and in maintaining the intracellular balance of A and G nucleotides. The sequence is that of GMP reductase from Streptococcus pyogenes serotype M49 (strain NZ131).